We begin with the raw amino-acid sequence, 361 residues long: S-adenosylmethionine:tRNA ribosyltransferase-isomerase (361 aa).

It belongs to the QueA family. Monomer.

The protein localises to the cytoplasm. It catalyses the reaction 7-aminomethyl-7-carbaguanosine(34) in tRNA + S-adenosyl-L-methionine = epoxyqueuosine(34) in tRNA + adenine + L-methionine + 2 H(+). It functions in the pathway tRNA modification; tRNA-queuosine biosynthesis. Transfers and isomerizes the ribose moiety from AdoMet to the 7-aminomethyl group of 7-deazaguanine (preQ1-tRNA) to give epoxyqueuosine (oQ-tRNA). The protein is S-adenosylmethionine:tRNA ribosyltransferase-isomerase of Glaesserella parasuis serovar 5 (strain SH0165) (Haemophilus parasuis).